The sequence spans 42 residues: Photosystem I reaction center subunit IX (42 aa).

Residues 7–27 (YLSVAPVLSTLWFGALAGLLI) form a helical membrane-spanning segment.

Belongs to the PsaJ family.

The protein localises to the plastid. The protein resides in the chloroplast thylakoid membrane. Its function is as follows. May help in the organization of the PsaE and PsaF subunits. This chain is Photosystem I reaction center subunit IX, found in Guizotia abyssinica (Niger).